Here is a 694-residue protein sequence, read N- to C-terminus: Nucleolin (694 aa).

Residues 1–277 (MVKLAKTPKN…EAKKKKTETP (277 aa)) form a disordered region. Positions 26-40 (ESEEEESSDLEESSG) are enriched in acidic residues. Positions 46–108 (PPKKQQKAAV…AVVGKGAKNG (63 aa)) are enriched in low complexity. Repeat copies occupy residues 55 to 61 (VTPAKKA), 62 to 68 (ATPAKKA), 69 to 75 (ATPAKKA), 76 to 82 (VTPAKKA), and 84 to 90 (ATPAKKA). Residues 55 to 90 (VTPAKKAATPAKKAATPAKKAVTPAKKAVATPAKKA) are 5 X 7 AA tandem repeats of X-T-P-X-K-K-X. Phosphoserine is present on residues S116 and S136. The span at 116–142 (SEEEDEDDEDDEEDEDEEEESDEEEEP) shows a compositional bias: acidic residues. Residues 143-168 (AVPVKPAAKKSAAAVPAKKPAVVPAK) show a composition bias toward low complexity. A Phosphoserine modification is found at S171. Residues 171-194 (SEEEEEEDDEEEDEEDDESEDEAM) are compositionally biased toward acidic residues. Over residues 196 to 213 (TTPAPVKKPTPAKATPAK) the composition is skewed to low complexity. Positions 218–246 (SEDEEDEEDEDEDEEDEDDEEEDEEESED) are enriched in acidic residues. 4 consecutive RRM domains span residues 281-357 (FSLF…KAKS), 371-445 (RTLF…YTGE), 461-535 (KTLI…FSSP), and 553-628 (KTLF…FAKP). A disordered region spans residues 631–694 (EFQRGGGFGG…KPQGKKIKFE (64 aa)). The segment covering 633-680 (QRGGGFGGGFGGRGGRGGRGGGRGGFGGRGGGRGFGGRGGGFRGGRGG) has biased composition (gly residues). The span at 681 to 694 (GGDHKPQGKKIKFE) shows a compositional bias: basic and acidic residues.

In terms of processing, highly phosphorylated during mitosis.

The protein localises to the nucleus. It localises to the nucleolus. In terms of biological role, nucleolin is the major nucleolar protein of growing eukaryotic cells. It is found associated with intranucleolar chromatin and pre-ribosomal particles. It induces chromatin decondensation by binding to histone H1. It is thought to play a role in pre-rRNA transcription and ribosome assembly. In Gallus gallus (Chicken), this protein is Nucleolin (NCL).